A 207-amino-acid chain; its full sequence is MSPTQEQLTALGGVFLAAVLVDKIAKTGQVTEAGLTCMLGSLLIRDPKDTLEVYGGDDLALREGYRALIGALERDPSTLQREPLRYALSMLGLERQLAKREDMLEVIGKRLPQIQSQVEHFGPAHENVVAACGALYQDTLSTLRQRIQVHGDMRNLQQPNNASKIRALLLAGIRSARLWRQLGGHRWQLVISRRKLLKELYPLMRNE.

Belongs to the HflD family.

It is found in the cytoplasm. The protein localises to the cell inner membrane. The protein is High frequency lysogenization protein HflD homolog of Pseudomonas fluorescens (strain SBW25).